We begin with the raw amino-acid sequence, 163 residues long: Phosphopantetheine adenylyltransferase (163 aa).

Thr11 provides a ligand contact to substrate. ATP contacts are provided by residues 11–12 (TF) and His19. Substrate contacts are provided by Lys43, Leu75, and Arg89. ATP contacts are provided by residues 90 to 92 (GLR), Glu100, and 125 to 131 (YSFISST).

This sequence belongs to the bacterial CoaD family. As to quaternary structure, homohexamer. It depends on Mg(2+) as a cofactor.

It localises to the cytoplasm. The enzyme catalyses (R)-4'-phosphopantetheine + ATP + H(+) = 3'-dephospho-CoA + diphosphate. It functions in the pathway cofactor biosynthesis; coenzyme A biosynthesis; CoA from (R)-pantothenate: step 4/5. Functionally, reversibly transfers an adenylyl group from ATP to 4'-phosphopantetheine, yielding dephospho-CoA (dPCoA) and pyrophosphate. This is Phosphopantetheine adenylyltransferase from Acinetobacter baylyi (strain ATCC 33305 / BD413 / ADP1).